An 815-amino-acid chain; its full sequence is Phenylalanine--tRNA ligase beta subunit (815 aa).

Residues 39 to 153 (ASHAQGVVVG…NVPDLGQPVG (115 aa)) enclose the tRNA-binding domain. Residues 414 to 498 (KSAEPVKLRR…RLVGFDRFEA (85 aa)) enclose the B5 domain. Mg(2+) is bound by residues Asp-476, Asp-482, Glu-485, and Glu-486. Positions 721–814 (PTVPAMELDL…LVKQFSAELR (94 aa)) constitute an FDX-ACB domain.

It belongs to the phenylalanyl-tRNA synthetase beta subunit family. Type 1 subfamily. In terms of assembly, tetramer of two alpha and two beta subunits. Mg(2+) is required as a cofactor.

It localises to the cytoplasm. The catalysed reaction is tRNA(Phe) + L-phenylalanine + ATP = L-phenylalanyl-tRNA(Phe) + AMP + diphosphate + H(+). The chain is Phenylalanine--tRNA ligase beta subunit from Prochlorococcus marinus (strain MIT 9313).